We begin with the raw amino-acid sequence, 237 residues long: Probable transcriptional regulatory protein MCAP_0598 (237 aa).

Belongs to the TACO1 family.

The protein localises to the cytoplasm. The sequence is that of Probable transcriptional regulatory protein MCAP_0598 from Mycoplasma capricolum subsp. capricolum (strain California kid / ATCC 27343 / NCTC 10154).